A 199-amino-acid polypeptide reads, in one-letter code: MNCVCRLVLVVLSLWPDRVVAPGPPAGSPRVSSDPRADLDSAVLLTRSLLADTRQLAAQMRDKFPADGDHNLDSLPTLAMSAGTLGSLQLPGVLTRLRVDLMSYFRHVQWLRRAAGPSLKTLEPELGALQARLERLLRRLQLLMSRLALPQAAPDQPAVPLGPPASAWGSIRAAHAILGGLHLTLDWAVRGLLLLKTRL.

The N-terminal stretch at Met-1–Ala-21 is a signal peptide. The important for interaction with IL11RA and for the stimulation of cell proliferation stretch occupies residues His-182–Arg-190.

This sequence belongs to the IL-6 superfamily. As to quaternary structure, interacts with IL11RA to associate with IL6ST, giving rise to a multimeric signaling complex.

The protein resides in the secreted. Cytokine that stimulates the proliferation of hematopoietic stem cells and megakaryocyte progenitor cells and induces megakaryocyte maturation resulting in increased platelet production. Also promotes the proliferation of hepatocytes in response to liver damage. Binding to its receptor formed by IL6ST and IL11RA activates a signaling cascade that promotes cell proliferation. Signaling leads to the activation of intracellular protein kinases and the phosphorylation of STAT3. The interaction with the membrane-bound IL11RA and IL6ST stimulates 'classic signaling', whereas the binding of IL11 and soluble IL11RA to IL6ST stimulates 'trans-signaling'. This is Interleukin-11 from Rattus norvegicus (Rat).